The chain runs to 831 residues: Periplasmic nitrate reductase (831 aa).

Positions 1 to 31 (MKLSRRDFMKANAAVAAAAAAGLTIPTVAKA) form a signal peptide, tat-type signal. In terms of domain architecture, 4Fe-4S Mo/W bis-MGD-type spans 40 to 96 (IKWDKAPCRFCGTGCGVLVGTQNGRIVASQGDPDSPVNRGLNCVKGYFLPKIMYGKD). [4Fe-4S] cluster is bound by residues Cys47, Cys50, Cys54, and Cys82. Mo-bis(molybdopterin guanine dinucleotide)-binding positions include Lys84, Gln151, Asn176, Cys180, 213–220 (WGSNMAEM), 244–248 (STFEH), 263–265 (QTD), Met373, Gln377, Asn483, 509–510 (SD), Lys532, Asp559, and 719–728 (TGRVLEHWHT). Phe795 is a substrate binding site. Mo-bis(molybdopterin guanine dinucleotide) contacts are provided by Asn803 and Lys820.

The protein belongs to the prokaryotic molybdopterin-containing oxidoreductase family. NasA/NapA/NarB subfamily. In terms of assembly, component of the periplasmic nitrate reductase NapAB complex composed of NapA and NapB. [4Fe-4S] cluster serves as cofactor. Requires Mo-bis(molybdopterin guanine dinucleotide) as cofactor. Post-translationally, predicted to be exported by the Tat system. The position of the signal peptide cleavage has not been experimentally proven.

It localises to the periplasm. The catalysed reaction is 2 Fe(II)-[cytochrome] + nitrate + 2 H(+) = 2 Fe(III)-[cytochrome] + nitrite + H2O. Functionally, catalytic subunit of the periplasmic nitrate reductase complex NapAB. Receives electrons from NapB and catalyzes the reduction of nitrate to nitrite. The polypeptide is Periplasmic nitrate reductase (Yersinia enterocolitica serotype O:8 / biotype 1B (strain NCTC 13174 / 8081)).